A 493-amino-acid chain; its full sequence is Aspartate-semialdehyde dehydrogenase (Non-phosphorylating) (493 aa).

NADP(+)-binding positions include 160-161 (WN), 184-187 (KPAH), and 237-238 (GS). The active-site Proton acceptor is the E259. L260 lines the NADP(+) pocket. The Nucleophile role is filled by C293. E390 contributes to the NADP(+) binding site.

It belongs to the aldehyde dehydrogenase family.

The protein resides in the cytoplasm. The enzyme catalyses L-aspartate 4-semialdehyde + NAD(+) + H2O = L-aspartate + NADH + 2 H(+). In terms of biological role, involved in the degradation of ectoine, which allows H.elongata to utilize ectoine as both a carbon and a nitrogen source for growth. Probably catalyzes the NAD(+)-dependent oxidation of L-aspartate-semialdehyde to L-aspartate. In Halomonas elongata (strain ATCC 33173 / DSM 2581 / NBRC 15536 / NCIMB 2198 / 1H9), this protein is Aspartate-semialdehyde dehydrogenase (Non-phosphorylating).